The following is a 74-amino-acid chain: ATP synthase subunit c (74 aa).

Helical transmembrane passes span 5-25 and 49-69; these read LAHI…IGVG and LFIG…VALL.

The protein belongs to the ATPase C chain family. In terms of assembly, F-type ATPases have 2 components, F(1) - the catalytic core - and F(0) - the membrane proton channel. F(1) has five subunits: alpha(3), beta(3), gamma(1), delta(1), epsilon(1). F(0) has four main subunits: a(1), b(1), b'(1) and c(10-14). The alpha and beta chains form an alternating ring which encloses part of the gamma chain. F(1) is attached to F(0) by a central stalk formed by the gamma and epsilon chains, while a peripheral stalk is formed by the delta, b and b' chains.

It localises to the cell inner membrane. Its function is as follows. F(1)F(0) ATP synthase produces ATP from ADP in the presence of a proton or sodium gradient. F-type ATPases consist of two structural domains, F(1) containing the extramembraneous catalytic core and F(0) containing the membrane proton channel, linked together by a central stalk and a peripheral stalk. During catalysis, ATP synthesis in the catalytic domain of F(1) is coupled via a rotary mechanism of the central stalk subunits to proton translocation. Key component of the F(0) channel; it plays a direct role in translocation across the membrane. A homomeric c-ring of between 10-14 subunits forms the central stalk rotor element with the F(1) delta and epsilon subunits. The sequence is that of ATP synthase subunit c from Roseobacter denitrificans (strain ATCC 33942 / OCh 114) (Erythrobacter sp. (strain OCh 114)).